The following is a 147-amino-acid chain: Hemoglobin subunit epsilon (147 aa).

Positions 3–147 constitute a Globin domain; sequence HLTAEEKSSV…VATALAHKYH (145 aa). Residues Ser-14 and Ser-51 each carry the phosphoserine modification. Residues His-64 and His-93 each coordinate heme b.

It belongs to the globin family. Heterotetramer of two alpha chains and two epsilon chains in early embryonic hemoglobin Gower-2; two zeta chains and two epsilon chains in early embryonic hemoglobin Gower-1. Red blood cells.

The epsilon chain is a beta-type chain of early mammalian embryonic hemoglobin. This is Hemoglobin subunit epsilon (HBE1) from Carlito syrichta (Philippine tarsier).